Here is a 179-residue protein sequence, read N- to C-terminus: Translationally-controlled tumor protein homolog (179 aa).

In terms of domain architecture, TCTP spans 1-179 (MIIYKDIISG…WKHGLEEMKV (179 aa)).

It belongs to the TCTP family.

The protein resides in the cytoplasm. It localises to the cytoskeleton. Functionally, involved in protein synthesis. Involved in microtubule stabilization. Involved in osmoadaptation. In Emericella nidulans (strain FGSC A4 / ATCC 38163 / CBS 112.46 / NRRL 194 / M139) (Aspergillus nidulans), this protein is Translationally-controlled tumor protein homolog.